The primary structure comprises 402 residues: Protein kinase US3 homolog (402 aa).

Disordered stretches follow at residues 1 to 21 (MSSS…KVHD) and 46 to 88 (FPDS…SPET). The Protein kinase domain maps to 102–386 (YNIVSSLSPG…AQDILMLPLF (285 aa)). Residues 108–116 (LSPGSEGYI) and lysine 129 each bind ATP. The active-site Proton acceptor is aspartate 218.

This sequence belongs to the protein kinase superfamily. Ser/Thr protein kinase family. Post-translationally, phosphorylated by UL13 homolog; this phosphorylation regulates subsequent phosphorylation of UL31 and UL34 homologs by US3. Autophosphorylated.

It localises to the host cytoplasm. Its subcellular location is the host nucleus. It carries out the reaction L-seryl-[protein] + ATP = O-phospho-L-seryl-[protein] + ADP + H(+). The catalysed reaction is L-threonyl-[protein] + ATP = O-phospho-L-threonyl-[protein] + ADP + H(+). Multifunctional serine/threonine kinase that plays a role in several processes including egress of virus particles from the nucleus, modulation of the actin cytoskeleton and inhibition of apoptosis. Phosphorylates UL31 and UL34 homologs, two critical regulators of capsid budding from nucleus to endoplasmic reticulum, thereby facilitating virion egress. Modulates and redistributes host components of the nuclear envelope, including LMNA, emerin/EMD and the nuclear matrix protein MATR3. Phosphorylates envelope glycoprotein B (gB), probably to direct it to the cell surface. Promotes virus intracellular spread by restructuring host cell cytoskeleton. Blocks host apoptosis to extend cell survival and allow efficient viral replication. Promotes viral gene expression by phosphorylating host HDAC2 to reduce viral genome silencing. This Gallus gallus (Chicken) protein is Protein kinase US3 homolog (MDV092).